The following is a 376-amino-acid chain: uncharacterized protein (376 aa).

The Peptidase M14 domain maps to 82-372; it reads KIYDDSAVEK…ATSGILWRAL (291 aa). 3 residues coordinate Zn(2+): His-138, Glu-141, and His-283. The active-site Proton donor/acceptor is the Glu-344.

Belongs to the peptidase M14 family. The cofactor is Zn(2+).

This is an uncharacterized protein from Bacillus subtilis (strain 168).